Here is a 1450-residue protein sequence, read N- to C-terminus: Actin cytoskeleton-regulatory complex protein PAN1 (1450 aa).

Residues 1-140 (MYSNPNNFFG…PPPPVKPQAT (140 aa)) form a disordered region. Composition is skewed to low complexity over residues 15–37 (GPGA…QQPD) and 59–71 (PGLQ…LQPQ). The segment covering 72 to 83 (FTGYGQTPQQGM) has biased composition (polar residues). The span at 93-119 (IPQQYQQQFQQQQTQQQQPQQQQMPFA) shows a compositional bias: low complexity. The segment covering 120-136 (AAPPQPTQTLAPPPPVK) has biased composition (pro residues). EH domains lie at 181-270 (DQAK…VSSM) and 444-533 (EKTR…STRN). EF-hand domains lie at 214 to 249 (LDGD…CNLK) and 477 to 512 (LEKP…IYRK). Disordered regions lie at residues 600-625 (RSSA…SNEE), 788-851 (SDQD…WEDA), and 865-1450 (LQRS…RVLD). The stretch at 622–741 (SNEELSLDQL…ELFRLKDAKA (120 aa)) forms a coiled coil. Residues 788 to 850 (SDQDAEKRLE…TEHEKRRWED (63 aa)) show a composition bias toward basic and acidic residues. Residues 902 to 924 (SPASISRTASPAAPPAAGGSYSS) are compositionally biased toward low complexity. Residues 960 to 1148 (ETAAQRAERE…LEAMDDDSSS (189 aa)) are a coiled coil. Basic and acidic residues-rich tracts occupy residues 965 to 997 (RAER…RLAE), 1026 to 1101 (AKPD…EEEK), and 1110 to 1140 (EAKE…RQLE). Residues 1141–1153 (AMDDDSSSDDEGP) show a composition bias toward acidic residues. Residues 1156 to 1169 (ITPQASTPTMNDSH) show a composition bias toward polar residues. 2 stretches are compositionally biased toward pro residues: residues 1178–1188 (QPTPPPAPVVS) and 1222–1239 (APAP…PPQP). Over residues 1265–1275 (RRPDDDGWGSD) the composition is skewed to basic and acidic residues. The span at 1276 to 1285 (KDEEDEESDD) shows a compositional bias: acidic residues. Residues 1314-1323 (GDKSATSPTV) show a composition bias toward polar residues. Pro residues-rich tracts occupy residues 1327 to 1352 (VAPP…PMPG), 1361 to 1375 (PGAP…PPMP), and 1381 to 1411 (PGAP…PPAA). Residues 1417–1434 (RPAGLLGQIQAGKALKKT) form the WH2 domain.

The protein belongs to the PAN1 family. In terms of assembly, component of the PAN1 actin cytoskeleton-regulatory complex.

The protein resides in the cell membrane. Its subcellular location is the endosome membrane. It is found in the cytoplasm. The protein localises to the cytoskeleton. It localises to the actin patch. Its function is as follows. Component of the PAN1 actin cytoskeleton-regulatory complex required for the internalization of endosomes during actin-coupled endocytosis. The complex links the site of endocytosis to the cell membrane-associated actin cytoskeleton. Mediates uptake of external molecules and vacuolar degradation of plasma membrane proteins. Plays a role in the proper organization of the cell membrane-associated actin cytoskeleton and promotes its destabilization. This Chaetomium globosum (strain ATCC 6205 / CBS 148.51 / DSM 1962 / NBRC 6347 / NRRL 1970) (Soil fungus) protein is Actin cytoskeleton-regulatory complex protein PAN1 (PAN1).